The sequence spans 67 residues: Preprofallaxidin-1 (67 aa).

A signal peptide spans Met-1–Cys-22. A propeptide spanning residues Asp-23–Arg-46 is cleaved from the precursor. The segment at Lys-24–Arg-46 is disordered. Residues Glu-30–Ser-42 show a composition bias toward acidic residues.

In terms of tissue distribution, expressed by the skin glands.

It is found in the secreted. Fallaxidin-4.1 shows antibacterial activity against the Gram-positive bacteria L.lactis (MIC=12 uM), M.luteus (MIC=100 uM), S.epidermidis (MIC=100 uM) and S.uberis (MIC=50 uM). No antibacterial activity against the Gram-positive bacteria B.cereus, E.faecalis, L.innocua, S.aureus, or the Gram-negative bacteria E.cloacae and E.coli. Inhibits the formation of NO by neuronal nitric oxide synthase with an IC(50) of 13.3 uM. The sequence is that of Preprofallaxidin-1 from Litoria fallax (Eastern dwarf tree frog).